Consider the following 254-residue polypeptide: Germin-like protein 4-1 (254 aa).

Residues 1–27 (MASRAFAAVFAAVALVVCSSVLPRALA) form the signal peptide. A disulfide bridge links Cys37 with Cys52. A Cupin type-1 domain is found at 67–220 (KALGVPGNTV…AFMIDKDQVD (154 aa)). Mn(2+) is bound by residues His115, His117, Glu122, and His166.

Belongs to the germin family. Oligomer (believed to be a pentamer but probably hexamer).

It localises to the secreted. Its subcellular location is the extracellular space. The protein localises to the apoplast. In terms of biological role, may play a role in plant defense. Probably has no oxalate oxidase activity even if the active site is conserved. In Oryza sativa subsp. japonica (Rice), this protein is Germin-like protein 4-1.